Reading from the N-terminus, the 191-residue chain is dCTP deaminase (191 aa).

DCTP-binding positions include 112–117 (KSTYAR), 136–138 (TLE), glutamine 157, tyrosine 173, and glutamine 183. The Proton donor/acceptor role is filled by glutamate 138.

The protein belongs to the dCTP deaminase family. Homotrimer.

It catalyses the reaction dCTP + H2O + H(+) = dUTP + NH4(+). Its pathway is pyrimidine metabolism; dUMP biosynthesis; dUMP from dCTP (dUTP route): step 1/2. Functionally, catalyzes the deamination of dCTP to dUTP. This is dCTP deaminase from Xylella fastidiosa (strain 9a5c).